Here is a 318-residue protein sequence, read N- to C-terminus: Pyrroline-5-carboxylate reductase ucsG (318 aa).

Belongs to the pyrroline-5-carboxylate reductase family.

It functions in the pathway mycotoxin biosynthesis. In terms of biological role, pyrroline-5-carboxylate reductase; part of the gene cluster that mediates the biosynthesis of UCS1025A, a member of the pyrrolizidinone family that acts as a strong telomerase inhibitor and displays potent antibacterial and antitumor properties. These compounds share a hemiaminal-containing pyrrolizidinone core fused with a gamma-lactone, giving a furopyrrolizidine that is connected to a decalin fragment. The polyketide synthase module (PKS) of the PKS-NRPS ucsA is responsible for the synthesis of the polyketide backbone via the condensation of an acetyl-CoA starter unit with 6 malonyl-CoA units. The downstream nonribosomal peptide synthetase (NRPS) module then amidates the carboxyl end of the polyketide with a 2S,3S-methylproline derived from L-isoleucine by the 2-oxoglutarate-dependent dioxygenase ucsF which converts L-isoleucine to (4S,5S)-4-methylpyrroline-5-carboxylate that is further converted to 2S,3S-methylproline by the pyrroline-5-carboxylate reductase ucsG. Reductive release of the completed aminoacyl polyketide from the assembly line can form the 3-pyrrolin-2-one structure via an intramolecular Knoevenagel reaction. Because ucsA lacks a designated enoylreductase (ER) domain, the required activity is provided the enoyl reductase ucsL. This keto acyclic precursor is the substrate of the Diels-Alderase ucsH, that catalyzes the Diels-Alder cycloaddition. Oxidation of the 3S-methyl group to a carboxylate by the cytochrome P450 monooxygenase ucsK allows an oxa-Michael cyclization that might involve the reductase/dehydrogenase ucsI and which furnishes the furopyrrolizidine. The oxidase ucsJ likely plays a critical role in stereoselective reduction of the C5-C6 double bond to afford the required R-configured carboxylate group. Further enolization and oxidation at C5 by an unidentified enzyme affords the last intermediate that can undergo oxa-Michael cyclization to yield UCS1025A. The protein is Pyrroline-5-carboxylate reductase ucsG of Acremonium sp.